The chain runs to 500 residues: Organic cation/carnitine transporter 7 (500 aa).

At 1–23 (MADGNTRFTVDEALVAMGFGKFQ) the chain is on the cytoplasmic side. The helical transmembrane segment at 24–44 (IYVLAYAGMGWVAEAMEMMLL) threads the bilayer. Residues 45 to 62 (SFVGPAVQSLWNLSARQE) are Extracellular-facing. Residue N56 is glycosylated (N-linked (GlcNAc...) asparagine). Residues 63–83 (SLITSVVFAGMLIGAYSWGIV) form a helical membrane-spanning segment. Residues 84–97 (SDKHGRRKGFIITA) are Cytoplasmic-facing. Residues 98-118 (VVTFVAGFLSAFSPNYMWLII) traverse the membrane as a helical segment. Residues 119-120 (LR) are Extracellular-facing. Residues 121–141 (CLVGLGLGGGPVLASWYLEFI) form a helical membrane-spanning segment. 137 to 144 (YLEFIPAP) provides a ligand contact to ATP. Residues 142–150 (PAPSRGTWM) lie on the Cytoplasmic side of the membrane. The chain crosses the membrane as a helical span at residues 151 to 171 (VVFSAFWTVGTIFEASLAWLV). Residues 172 to 174 (MPR) are Extracellular-facing. The chain crosses the membrane as a helical span at residues 175-195 (LGWRWLLAFSSVPSSLLLLFY). The Cytoplasmic segment spans residues 196 to 293 (RWTSESPRYL…ALLSPTLMKR (98 aa)). Residues 294-314 (TLLLWVVFFGNAFAYYGVVLL) form a helical membrane-spanning segment. At 315-341 (TTELNNSHNRCYPTEKQLRNSNDVNYR) the chain is on the extracellular side. An N-linked (GlcNAc...) asparagine glycan is attached at N319. A helical transmembrane segment spans residues 342–362 (DVFIASFAEFPGLLISAAMVD). Residues 363–367 (RLGRK) are Cytoplasmic-facing. A helical transmembrane segment spans residues 368 to 387 (ASMASMLFTCCIFLLPLLSH). At 388 to 401 (QSPFITTVLLFGGR) the chain is on the extracellular side. Residues 402–422 (ICISAAFTVVYIYAPEIYPTA) form a helical membrane-spanning segment. Over 423 to 429 (VRTTGVG) the chain is Cytoplasmic. Residues 430-450 (VGSSVGRIGGILCPLVAVGLV) traverse the membrane as a helical segment. Residues 451 to 456 (HGCHQT) lie on the Extracellular side of the membrane. A helical transmembrane segment spans residues 457–477 (IAVLLFEVVILVSGICVCLFP). Topologically, residues 478-500 (FETSGRDLTDSISASKEPPSASV) are cytoplasmic.

This sequence belongs to the major facilitator (TC 2.A.1) superfamily. Organic cation transporter (TC 2.A.1.19) family. As to expression, expressed in pollen.

Its subcellular location is the membrane. High affinity carnitine transporter involved in the active cellular uptake of carnitine. Also transports organic cations. The polypeptide is Organic cation/carnitine transporter 7 (OCT7) (Arabidopsis thaliana (Mouse-ear cress)).